Here is a 949-residue protein sequence, read N- to C-terminus: Glycine dehydrogenase (decarboxylating) (949 aa).

K699 carries the post-translational modification N6-(pyridoxal phosphate)lysine.

It belongs to the GcvP family. As to quaternary structure, the glycine cleavage system is composed of four proteins: P, T, L and H. Pyridoxal 5'-phosphate is required as a cofactor.

It carries out the reaction N(6)-[(R)-lipoyl]-L-lysyl-[glycine-cleavage complex H protein] + glycine + H(+) = N(6)-[(R)-S(8)-aminomethyldihydrolipoyl]-L-lysyl-[glycine-cleavage complex H protein] + CO2. The glycine cleavage system catalyzes the degradation of glycine. The P protein binds the alpha-amino group of glycine through its pyridoxal phosphate cofactor; CO(2) is released and the remaining methylamine moiety is then transferred to the lipoamide cofactor of the H protein. In Roseobacter denitrificans (strain ATCC 33942 / OCh 114) (Erythrobacter sp. (strain OCh 114)), this protein is Glycine dehydrogenase (decarboxylating).